A 497-amino-acid polypeptide reads, in one-letter code: Proline--tRNA ligase (497 aa).

Belongs to the class-II aminoacyl-tRNA synthetase family. ProS type 3 subfamily. As to quaternary structure, homodimer.

The protein resides in the cytoplasm. The catalysed reaction is tRNA(Pro) + L-proline + ATP = L-prolyl-tRNA(Pro) + AMP + diphosphate. Functionally, catalyzes the attachment of proline to tRNA(Pro) in a two-step reaction: proline is first activated by ATP to form Pro-AMP and then transferred to the acceptor end of tRNA(Pro). The sequence is that of Proline--tRNA ligase from Deinococcus geothermalis (strain DSM 11300 / CIP 105573 / AG-3a).